The chain runs to 91 residues: MSKVAVLLRVLPDDAETKPEELYKKIAAALPEKYQVAQYQAEPIAFGLEALRMVILMPEETEGGTEELETIIQSVQGVSQVDVLNVTRFSG.

It belongs to the EF-1-beta/EF-1-delta family.

Functionally, promotes the exchange of GDP for GTP in EF-1-alpha/GDP, thus allowing the regeneration of EF-1-alpha/GTP that could then be used to form the ternary complex EF-1-alpha/GTP/AAtRNA. This chain is Elongation factor 1-beta, found in Thermofilum pendens (strain DSM 2475 / Hrk 5).